We begin with the raw amino-acid sequence, 170 residues long: Adenine phosphoribosyltransferase (170 aa).

It belongs to the purine/pyrimidine phosphoribosyltransferase family. As to quaternary structure, homodimer.

The protein resides in the cytoplasm. The enzyme catalyses AMP + diphosphate = 5-phospho-alpha-D-ribose 1-diphosphate + adenine. Its pathway is purine metabolism; AMP biosynthesis via salvage pathway; AMP from adenine: step 1/1. Its function is as follows. Catalyzes a salvage reaction resulting in the formation of AMP, that is energically less costly than de novo synthesis. This is Adenine phosphoribosyltransferase from Bacillus subtilis (strain 168).